The chain runs to 98 residues: Plastocyanin (98 aa).

A Plastocyanin-like domain is found at 1 to 98; it reads DVTVKLGADS…AGMKGTITVQ (98 aa). Residues His38, Cys83, His86, and Met91 each coordinate Cu cation.

It belongs to the plastocyanin family. Cu(2+) is required as a cofactor.

It localises to the plastid. The protein resides in the chloroplast thylakoid membrane. In terms of biological role, participates in electron transfer between P700 and the cytochrome b6-f complex in photosystem I. The sequence is that of Plastocyanin (petE) from Scenedesmus fuscus (Green alga).